The following is a 507-amino-acid chain: Glycerol kinase 2 (507 aa).

T16 provides a ligand contact to ADP. ATP is bound by residues T16, T17, and S18. T16 is a binding site for sn-glycerol 3-phosphate. Residue R20 participates in ADP binding. Residues R86, E87, Y138, and D248 each contribute to the sn-glycerol 3-phosphate site. Positions 86, 87, 138, 248, and 249 each coordinate glycerol. Residues T270 and G314 each contribute to the ADP site. Positions 270, 314, 318, and 415 each coordinate ATP. ADP contacts are provided by G415 and N419.

The protein belongs to the FGGY kinase family.

The enzyme catalyses glycerol + ATP = sn-glycerol 3-phosphate + ADP + H(+). The protein operates within polyol metabolism; glycerol degradation via glycerol kinase pathway; sn-glycerol 3-phosphate from glycerol: step 1/1. Its activity is regulated as follows. Inhibited by fructose 1,6-bisphosphate (FBP). Its function is as follows. Key enzyme in the regulation of glycerol uptake and metabolism. Catalyzes the phosphorylation of glycerol to yield sn-glycerol 3-phosphate. The chain is Glycerol kinase 2 from Streptomyces avermitilis (strain ATCC 31267 / DSM 46492 / JCM 5070 / NBRC 14893 / NCIMB 12804 / NRRL 8165 / MA-4680).